Reading from the N-terminus, the 1273-residue chain is MSETGKNSTAELSAVKVTVKLPESIVHHRSHQKKQQSHNVKETNELSFQFPRETRVQTILDVLSYAQATKYLTNFKLKTVHQILNPEQSINEIINDEKSNHLNLSIELCPYNTREIVRHVLTLRDFIGFALETEDGISEFSISTGSKFSNIPFMDVKEKQEEIEEIPRDDNKNLPKKNVLKVSQEEKDNFSKEVHSILDSFKYSNSNLKSAYSTISNIVTPCLNSLNLSAFNPVPAFFKTKGHILYLHIVTLEGESFHVTAVPSGFYINKSSSNKFDPSMKDVEGITQQDSIKYNLYDLIALHSKKFHSHVEALEKKLAAYQSIEYVKPLTTFLHKPWLVSSLPANNADYSRMQLDSSQYESERNFNDEFQAIRELPTPTVQESIQSERLLSRISHEFTTAAVKGAMSIFYGEMLPLNPESDDQIFLRDNIFYSYVMDANGSYDGKGGNDAAFAASNQDLKTIQILKNLKMKDVYYLLTTIIDFGGKRILAQTPVPGLLSNMGADVITDADSGEQMIVDKKSEVSVVYGLDEESGKVLANDQFDKSVSEEFSKYLHLKSHDVEGSKISFSYQSKGILGSDKRNYIIDLANTYPLDVKFAKEHFDNAEESKRYPHRQTLLRPELVEKWWNSKVQAEGIEINKAYDEAKFTYNPDAYQVEGVEDVNIQDMSSYLVETVLPSVIEDYATGNVSVPYDGEHLVDTLHINGINVRYLGKLAILAKEKLQLQEEVHEKRLKEIEISNKDYEEWEASYLKKIEKMIIERQEKVNKLVQEGKEVPKELTEELKLNEDDIRKPTDDAPAVVNTDELLPLIKVTEIEIFARTMKHILRKYTKDLPVVAIPSMIAFVLNLLFGQKYNEVPKPESVDSFYDVDTYEFSKLTRDGLIKEIQLVSELRFRYELAADFVDQFSDAPFILIRSIARKSGIQFLNKDYFFTKDQFEEFKLSQDKKVRGKLVAPANTFTVSDLNMIPRIKDIDYSSVLSDQKWAEGSMLLNEDQNAALTLFAQAIAIKEEVNGVLHKDVAEKYLTLSTVYSKLGLTPEAVAFCRKSCAIYERVSGIDSFEMLRSLSNLALLEFANESPYNSALVFKRIVETLESLKITEKIHHPAALNAFNQLEQMSLGVENTKLTVELCKQFRSLIVSLDGNDTLAYATLESRIGNLYASINDFHNAMEHISKTPRIFTRELGTNHQITAQSRQWVNGLSNLMKDAQQKKKLAAEQASVNSGSRKKNVNQKADAPKAELAEKSVDELLDFIEGGSTEKSKKKSSKKKGKK.

The Clu domain occupies 344–599 (PANNADYSRM…NTYPLDVKFA (256 aa)). TPR repeat units follow at residues 981–1013 (SDQKWAEGSMLLNEDQNAALTLFAQAIAIKEEV), 1022–1055 (AEKYLTLSTVYSKLGLTPEAVAFCRKSCAIYERV), and 1151–1184 (ATLESRIGNLYASINDFHNAMEHISKTPRIFTRE). Disordered stretches follow at residues 1217–1242 (AEQASVNSGSRKKNVNQKADAPKAEL) and 1254–1273 (IEGGSTEKSKKKSSKKKGKK). Residues 1262–1273 (SKKKSSKKKGKK) are compositionally biased toward basic residues.

It belongs to the CLU family. As to quaternary structure, may associate with the eukaryotic translation initiation factor 3 (eIF-3) complex.

It is found in the cytoplasm. Its function is as follows. mRNA-binding protein involved in proper cytoplasmic distribution of mitochondria. This chain is Clustered mitochondria protein homolog, found in Vanderwaltozyma polyspora (strain ATCC 22028 / DSM 70294 / BCRC 21397 / CBS 2163 / NBRC 10782 / NRRL Y-8283 / UCD 57-17) (Kluyveromyces polysporus).